The primary structure comprises 433 residues: Glutamyl-tRNA reductase (433 aa).

Substrate-binding positions include Thr-49 to Arg-52, Ser-114, Glu-119 to Gln-121, and Gln-125. Cys-50 (nucleophile) is an active-site residue. Gly-201–Ile-206 is a binding site for NADP(+).

The protein belongs to the glutamyl-tRNA reductase family. Homodimer.

The enzyme catalyses (S)-4-amino-5-oxopentanoate + tRNA(Glu) + NADP(+) = L-glutamyl-tRNA(Glu) + NADPH + H(+). Its pathway is porphyrin-containing compound metabolism; protoporphyrin-IX biosynthesis; 5-aminolevulinate from L-glutamyl-tRNA(Glu): step 1/2. In terms of biological role, catalyzes the NADPH-dependent reduction of glutamyl-tRNA(Glu) to glutamate 1-semialdehyde (GSA). This is Glutamyl-tRNA reductase from Histophilus somni (strain 129Pt) (Haemophilus somnus).